Consider the following 96-residue polypeptide: Protein Vpr (96 aa).

The segment at 1–42 (MEQAPEDQGPQREPYNEWTLELLEELKSEAVRHFPRLWLHSL) is homooligomerization. Phosphoserine; by host occurs at positions 79, 94, and 96.

The protein belongs to the HIV-1 VPR protein family. As to quaternary structure, homooligomer, may form homodimer. Interacts with p6-gag region of the Pr55 Gag precursor protein through a (Leu-X-X)4 motif near the C-terminus of the P6gag protein. Interacts with host UNG. May interact with host RAD23A/HHR23A. Interacts with host VPRBP/DCAF1, leading to hijack the CUL4A-RBX1-DDB1-DCAF1/VPRBP complex, mediating ubiquitination of host proteins such as TERT and ZGPAT and arrest of the cell cycle in G2 phase. In terms of processing, phosphorylated on several residues by host. These phosphorylations regulate VPR activity for the nuclear import of the HIV-1 pre-integration complex.

The protein localises to the virion. It localises to the host nucleus. Its subcellular location is the host extracellular space. Its function is as follows. During virus replication, may deplete host UNG protein, and incude G2-M cell cycle arrest. Acts by targeting specific host proteins for degradation by the 26S proteasome, through association with the cellular CUL4A-DDB1 E3 ligase complex by direct interaction with host VPRPB/DCAF-1. Cell cycle arrest reportedly occurs within hours of infection and is not blocked by antiviral agents, suggesting that it is initiated by the VPR carried into the virion. Additionally, VPR induces apoptosis in a cell cycle dependent manner suggesting that these two effects are mechanistically linked. Detected in the serum and cerebrospinal fluid of AIDS patient, VPR may also induce cell death to bystander cells. In terms of biological role, during virus entry, plays a role in the transport of the viral pre-integration (PIC) complex to the host nucleus. This function is crucial for viral infection of non-dividing macrophages. May act directly at the nuclear pore complex, by binding nucleoporins phenylalanine-glycine (FG)-repeat regions. The chain is Protein Vpr from Human immunodeficiency virus type 1 group M subtype B (isolate RF/HAT3) (HIV-1).